Here is a 336-residue protein sequence, read N- to C-terminus: Fructose-1,6-bisphosphatase class 1 (336 aa).

Positions 92, 115, 117, and 118 each coordinate Mg(2+). Substrate contacts are provided by residues 118-121 (DGSS), asparagine 211, tyrosine 244, 262-264 (YLY), and lysine 274. Glutamate 280 is a Mg(2+) binding site.

Belongs to the FBPase class 1 family. Homotetramer. The cofactor is Mg(2+).

It is found in the cytoplasm. The enzyme catalyses beta-D-fructose 1,6-bisphosphate + H2O = beta-D-fructose 6-phosphate + phosphate. It functions in the pathway carbohydrate biosynthesis; gluconeogenesis. The sequence is that of Fructose-1,6-bisphosphatase class 1 from Vibrio cholerae serotype O1 (strain ATCC 39541 / Classical Ogawa 395 / O395).